We begin with the raw amino-acid sequence, 489 residues long: Endothelial zinc finger protein induced by tumor necrosis factor alpha (489 aa).

Residues 1–15 (MKELDPKNDISEDKL) are compositionally biased toward basic and acidic residues. Disordered regions lie at residues 1-61 (MKEL…PLGI) and 98-122 (EKGACPPVRRGKNFSSTSDLSKPPM). 13 consecutive C2H2-type zinc fingers follow at residues 130–152 (YDCSECGKAFSRSSSLIKHQRIH), 158–180 (FECDTCGKHFIERSSLTIHQRVH), 186–208 (YACGDCGKAFSQRMNLTVHQRTH), 214–236 (YVCDVCGKAFRKTSSLTQHERIH), 242–264 (YACGDCGKAFSQNMHLIVHQRTH), 270–292 (YVCPECGRAFSQNMHLTEHQRTH), 298–320 (YACKECGKAFNKSSSLTLHQRNH), 326–348 (YVCGECGKAFSQSSYLIQHQRFH), 354–376 (FECSECGKAFSKNSSLTQHQRIH), 382–404 (YECYICKKHFTGRSSLIVHQIVH), 410–432 (YVCGECGKAFSQSAYLIEHQRIH), 438–460 (YRCGQCGKSFIKNSSLTVHQRIH), and 466–488 (YRCGECGKTFSRNTNLTRHLRIH).

This sequence belongs to the krueppel C2H2-type zinc-finger protein family. Highly expressed in placenta, followed by brain, testis, pancreas, heart, small intestine, muscle, uterus, prostate and peripheral blood leukocytes. Not detected in liver, lung, colon, stomach, salivary and thyroid gland.

The protein localises to the nucleus. Its function is as follows. May be involved in transcriptional regulation. The chain is Endothelial zinc finger protein induced by tumor necrosis factor alpha (ZNF71) from Homo sapiens (Human).